Here is a 218-residue protein sequence, read N- to C-terminus: N-(5'-phosphoribosyl)anthranilate isomerase (218 aa).

It belongs to the TrpF family.

The enzyme catalyses N-(5-phospho-beta-D-ribosyl)anthranilate = 1-(2-carboxyphenylamino)-1-deoxy-D-ribulose 5-phosphate. The protein operates within amino-acid biosynthesis; L-tryptophan biosynthesis; L-tryptophan from chorismate: step 3/5. This is N-(5'-phosphoribosyl)anthranilate isomerase from Alcanivorax borkumensis (strain ATCC 700651 / DSM 11573 / NCIMB 13689 / SK2).